We begin with the raw amino-acid sequence, 265 residues long: uncharacterized protein (265 aa).

A helical membrane pass occupies residues 1-21; that stretch reads MAFNNSTIIIIIVIAFAFFLI. N-linked (GlcNAc...) asparagine; by host glycosylation is found at Asn-74 and Asn-142.

It localises to the host membrane. The protein resides in the virion. This is an uncharacterized protein from Acanthamoeba polyphaga mimivirus (APMV).